The sequence spans 379 residues: Probable 3-phenylpropionic acid transporter (379 aa).

Residues 1-4 are Cytoplasmic-facing; sequence MVLQ. Residues 5-31 traverse the membrane as a helical segment; the sequence is STRWLALGYFTYFFSYGIFLPFWSVWL. Topologically, residues 32 to 37 are periplasmic; it reads KGIGLT. The helical transmembrane segment at 38–66 threads the bilayer; that stretch reads PETIGLLLGAGLVARFLGSLLIAPRVSDP. Topologically, residues 67-70 are cytoplasmic; the sequence is SRLI. The chain crosses the membrane as a helical span at residues 71–96; sequence SALRVLALLTLLFAVAFWAGAHVAWL. The Periplasmic segment spans residues 97–100; the sequence is MLVM. A helical membrane pass occupies residues 101-118; it reads IGFNLFFSPLVPLTDALA. The Cytoplasmic segment spans residues 119–129; the sequence is NTWQKQFPLDY. The helical transmembrane segment at 130–152 threads the bilayer; it reads GKVRLWGSVAFVIGSALTGKLVT. Residues 153 to 155 are Periplasmic-facing; that stretch reads MFD. A helical transmembrane segment spans residues 156–175; that stretch reads YRVILALLTLGVASMLLGFL. At 176–207 the chain is on the cytoplasmic side; sequence IRPTIQPQGASRQQESTGWSAWLALVRQNWRF. The chain crosses the membrane as a helical span at residues 208 to 227; that stretch reads LACVCLLQGAHAAYYGFSAI. The Periplasmic portion of the chain corresponds to 228-231; that stretch reads YWQA. The helical transmembrane segment at 232 to 256 threads the bilayer; the sequence is AGYSASAVGYLWSLGVVAEVIIFAL. Over 257 to 266 the chain is Cytoplasmic; that stretch reads SNKLFRRCSA. Residues 267–286 traverse the membrane as a helical segment; the sequence is RDMLLISAICGVVRWGIMGA. Residues 287 to 289 are Periplasmic-facing; that stretch reads TTA. Residues 290-312 traverse the membrane as a helical segment; sequence LPWLIVVQILHCGTFTVCHLAAM. The Cytoplasmic portion of the chain corresponds to 313-323; the sequence is RYIAARQGSEV. The chain crosses the membrane as a helical span at residues 324–351; the sequence is IRLQAVYSAVAMGGSIAIMTVFAGFLYQ. At 352 to 354 the chain is on the periplasmic side; it reads YLG. Residues 355–375 traverse the membrane as a helical segment; that stretch reads HGVFWVMALVALPAMFLRPKV. Over 376–379 the chain is Cytoplasmic; that stretch reads VPSC.

The protein belongs to the major facilitator superfamily. Phenyl propionate permease (PPP) (TC 2.A.1.27) family.

The protein resides in the cell inner membrane. Probable permease involved in the uptake of 3-phenylpropionic acid. This Escherichia coli (strain K12) protein is Probable 3-phenylpropionic acid transporter (hcaT).